We begin with the raw amino-acid sequence, 431 residues long: Ubiquitin-like modifier-activating enzyme 5 (431 aa).

ATP contacts are provided by Gly92, Asp113, Lys136, Asn159, and Asn197. Zn(2+)-binding residues include Cys239 and Cys242. The active-site Glycyl thioester intermediate is Cys263. 2 residues coordinate Zn(2+): Cys316 and Cys321. Positions 339 to 396 are disordered; it reads AKAKMEADASTTIDEGPLHDDNEWNISVVDDENEKDTTKAASSSDTLPEGLTRELPVA.

The protein belongs to the ubiquitin-activating E1 family. UBA5 subfamily.

Functionally, E1-like enzyme which activates UFM1. The protein is Ubiquitin-like modifier-activating enzyme 5 of Arabidopsis thaliana (Mouse-ear cress).